Here is a 458-residue protein sequence, read N- to C-terminus: Cell death abnormality protein 8 (458 aa).

Residues M1 to C45 lie on the Cytoplasmic side of the membrane. Residues F46–F66 form a helical membrane-spanning segment. The Extracellular segment spans residues H67–S77. A helical transmembrane segment spans residues L78–M98. The Cytoplasmic portion of the chain corresponds to L99–R123. Residues F124–Y144 traverse the membrane as a helical segment. Topologically, residues Y145–W219 are extracellular. A helical transmembrane segment spans residues L220–V240. Over Q241–R274 the chain is Cytoplasmic. 2 helical membrane-spanning segments follow: residues I275–V295 and H296–T316. Position 317 (H317) is a topological domain, extracellular. The chain crosses the membrane as a helical span at residues I318–V338. The Cytoplasmic portion of the chain corresponds to E339–E353. The chain crosses the membrane as a helical span at residues F354–I374. At E375–Q378 the chain is on the extracellular side. Residues V379 to F399 traverse the membrane as a helical segment. Over H400–N458 the chain is Cytoplasmic.

Belongs to the XK family. Post-translationally, cleavage by ced-3 activates ced-8 function in promoting phosphatidylserine exposure at the surface of apoptotic cells.

It localises to the cell membrane. The enzyme catalyses a 1,2-diacyl-sn-glycero-3-phospho-L-serine(in) = a 1,2-diacyl-sn-glycero-3-phospho-L-serine(out). In terms of biological role, phospholipid scramblase that acts downstream of ced-9 and caspase ced-3 to promote phosphatidylserine exposure on apoptotic cell surface. Phosphatidylserine is a specific marker only present at the surface of apoptotic cells and acts as a specific signal for engulfment. Regulates apoptosis kinetics during embryonic development. Not required for engulfment of germ cell corpses. The polypeptide is Cell death abnormality protein 8 (Caenorhabditis elegans).